A 209-amino-acid chain; its full sequence is High frequency lysogenization protein HflD homolog (209 aa).

It belongs to the HflD family.

It localises to the cytoplasm. The protein resides in the cell inner membrane. The sequence is that of High frequency lysogenization protein HflD homolog from Sodalis glossinidius (strain morsitans).